Consider the following 65-residue polypeptide: Small ribosomal subunit protein bS21 (65 aa).

The segment at 45-65 (GRLKRSRSKRRAQRANEERNS) is disordered. Over residues 48–57 (KRSRSKRRAQ) the composition is skewed to basic residues.

Belongs to the bacterial ribosomal protein bS21 family.

The chain is Small ribosomal subunit protein bS21 from Chlorobium luteolum (strain DSM 273 / BCRC 81028 / 2530) (Pelodictyon luteolum).